The sequence spans 780 residues: LPS-assembly protein LptD (780 aa).

Positions 1-24 are cleaved as a signal peptide; it reads MKKRLPTLLASLIGSALYSQQALA.

This sequence belongs to the LptD family. As to quaternary structure, component of the lipopolysaccharide transport and assembly complex. Interacts with LptE and LptA.

It localises to the cell outer membrane. Functionally, together with LptE, is involved in the assembly of lipopolysaccharide (LPS) at the surface of the outer membrane. In Sodalis glossinidius (strain morsitans), this protein is LPS-assembly protein LptD.